Here is a 313-residue protein sequence, read N- to C-terminus: Testis-expressed protein 264 (313 aa).

At 1-6 the chain is on the lumenal side; that stretch reads MSDLLL. Residues 7 to 31 traverse the membrane as a helical; Signal-anchor for type III membrane protein segment; that stretch reads LGLIGGLTLLLLLTLLAFAGYSGLL. The Cytoplasmic segment spans residues 32–313; the sequence is AGVEVSAGSP…EPTAPEKGKE (282 aa). The segment at 193–313 is disordered; the sequence is PEMKETEWKW…EPTAPEKGKE (121 aa). The span at 219–247 shows a compositional bias: polar residues; that stretch reads DTMSDTSSVSLEVSPGSRETSAATLSPGA. Phosphoserine is present on residues serine 239 and serine 244. Positions 251-263 are enriched in basic and acidic residues; it reads GWDDGDTRSEHSY. Over residues 264–273 the composition is skewed to low complexity; it reads SESGASGSSF. Residues 273-276 carry the LIR motif motif; it reads FEEL.

Interacts (via the LIR motif) with ATG8 family proteins MAP1LC3A, MAP1LC3B, GABARAP and GABARAPL1. Interacts with VCP/p97; bridging VCP/p97 to covalent DNA-protein cross-links (DPCs). Interacts with TOP1 (when sumoylated).

Its subcellular location is the endoplasmic reticulum membrane. It localises to the cytoplasmic vesicle. It is found in the autophagosome. The protein localises to the cytoplasm. The protein resides in the cytosol. Its subcellular location is the nucleus. It localises to the chromosome. Functionally, major reticulophagy (also called ER-phagy) receptor that acts independently of other candidate reticulophagy receptors to remodel subdomains of the endoplasmic reticulum into autophagosomes upon nutrient stress, which then fuse with lysosomes for endoplasmic reticulum turnover. The ATG8-containing isolation membrane (IM) cradles a tubular segment of TEX264-positive ER near a three-way junction, allowing the formation of a synapse of 2 juxtaposed membranes with trans interaction between the TEX264 and ATG8 proteins. Expansion of the IM would extend the capture of ER, possibly through a 'zipper-like' process involving continued trans TEX264-ATG8 interactions, until poorly understood mechanisms lead to the fission of relevant membranes and, ultimately, autophagosomal membrane closure. Also involved in the repair of covalent DNA-protein cross-links (DPCs) during DNA synthesis: acts by bridging VCP/p97 to covalent DNA-protein cross-links (DPCs) and initiating resolution of DPCs by SPRTN. The chain is Testis-expressed protein 264 from Homo sapiens (Human).